Reading from the N-terminus, the 218-residue chain is MSELANYGPGAIRAAYSGDYGFRTPPPDLPSLLLNERIVYLGTPINDVVAELLIAQLLYLESEDNAKPIEIYINSPGVAGFETSAFAVYDTMRHVRMPIKTICLGLAGGFSALLMAAGTKGQRMSLPNSRIILYQPYGGARGQATDINIRAQELLTTKRTLNQLLSIHTGKTVEQIDKDTERLFYMSPQEAVSYGLIDKVLEPSANKLAKLKAVGAPV.

This sequence belongs to the peptidase S14 family. In terms of assembly, fourteen ClpP subunits assemble into 2 heptameric rings which stack back to back to give a disk-like structure with a central cavity, resembling the structure of eukaryotic proteasomes.

It is found in the cytoplasm. It catalyses the reaction Hydrolysis of proteins to small peptides in the presence of ATP and magnesium. alpha-casein is the usual test substrate. In the absence of ATP, only oligopeptides shorter than five residues are hydrolyzed (such as succinyl-Leu-Tyr-|-NHMec, and Leu-Tyr-Leu-|-Tyr-Trp, in which cleavage of the -Tyr-|-Leu- and -Tyr-|-Trp bonds also occurs).. Its function is as follows. Cleaves peptides in various proteins in a process that requires ATP hydrolysis. Has a chymotrypsin-like activity. Plays a major role in the degradation of misfolded proteins. This Gloeobacter violaceus (strain ATCC 29082 / PCC 7421) protein is ATP-dependent Clp protease proteolytic subunit 2.